The chain runs to 415 residues: Methylthioribose-1-phosphate isomerase (415 aa).

The active-site Proton donor is the D284.

It belongs to the eIF-2B alpha/beta/delta subunits family. MtnA subfamily.

It localises to the cytoplasm. The protein resides in the nucleus. It catalyses the reaction 5-(methylsulfanyl)-alpha-D-ribose 1-phosphate = 5-(methylsulfanyl)-D-ribulose 1-phosphate. Its pathway is amino-acid biosynthesis; L-methionine biosynthesis via salvage pathway; L-methionine from S-methyl-5-thio-alpha-D-ribose 1-phosphate: step 1/6. Catalyzes the interconversion of methylthioribose-1-phosphate (MTR-1-P) into methylthioribulose-1-phosphate (MTRu-1-P). In Vanderwaltozyma polyspora (strain ATCC 22028 / DSM 70294 / BCRC 21397 / CBS 2163 / NBRC 10782 / NRRL Y-8283 / UCD 57-17) (Kluyveromyces polysporus), this protein is Methylthioribose-1-phosphate isomerase.